Reading from the N-terminus, the 140-residue chain is Small ribosomal subunit protein uS12 (140 aa).

2 disordered regions span residues 36 to 56 (TYNP…MTPK) and 117 to 140 (TSGV…EKKE).

It belongs to the universal ribosomal protein uS12 family. As to quaternary structure, part of the 30S ribosomal subunit. Contacts proteins S8 and S17. May interact with IF1 in the 30S initiation complex.

Functionally, with S4 and S5 plays an important role in translational accuracy. In terms of biological role, interacts with and stabilizes bases of the 16S rRNA that are involved in tRNA selection in the A site and with the mRNA backbone. Located at the interface of the 30S and 50S subunits, it traverses the body of the 30S subunit contacting proteins on the other side and probably holding the rRNA structure together. The combined cluster of proteins S8, S12 and S17 appears to hold together the shoulder and platform of the 30S subunit. The polypeptide is Small ribosomal subunit protein uS12 (Malacoplasma penetrans (strain HF-2) (Mycoplasma penetrans)).